The chain runs to 301 residues: Homoserine kinase (301 aa).

89–99 serves as a coordination point for ATP; that stretch reads KPGSGLGSSSA.

This sequence belongs to the GHMP kinase family. Homoserine kinase subfamily.

The protein resides in the cytoplasm. It carries out the reaction L-homoserine + ATP = O-phospho-L-homoserine + ADP + H(+). The protein operates within amino-acid biosynthesis; L-threonine biosynthesis; L-threonine from L-aspartate: step 4/5. Functionally, catalyzes the ATP-dependent phosphorylation of L-homoserine to L-homoserine phosphate. This chain is Homoserine kinase, found in Methanococcus maripaludis (strain DSM 14266 / JCM 13030 / NBRC 101832 / S2 / LL).